The sequence spans 490 residues: Lysine--tRNA ligase (490 aa).

Mg(2+)-binding residues include Glu-398 and Glu-405.

The protein belongs to the class-II aminoacyl-tRNA synthetase family. Homodimer. The cofactor is Mg(2+).

Its subcellular location is the cytoplasm. The catalysed reaction is tRNA(Lys) + L-lysine + ATP = L-lysyl-tRNA(Lys) + AMP + diphosphate. The polypeptide is Lysine--tRNA ligase (Metamycoplasma arthritidis (strain 158L3-1) (Mycoplasma arthritidis)).